The sequence spans 498 residues: E3 ubiquitin-protein ligase TRIM22 (498 aa).

The RING-type zinc-finger motif lies at 15-60 (CPICLELLTEPLSLDCGHSFCQACITAKIKESVIISRGESSCPVCQ). Residues 92 to 133 (QKRDVCEHHGKKLQIFCKEDGKVICWVCELSQEHQGHQTFRI) form a B box-type zinc finger. Positions 97, 100, 119, and 125 each coordinate Zn(2+). A coiled-coil region spans residues 132 to 248 (RINEVVKECQ…RRLRGSSVEM (117 aa)). The short motif at 257-275 (KRSESWTLKKPKSVSKKLK) is the Nuclear localization signal element. The region spanning 283-498 (LSGMLQVLKE…VPMTVCPPSS (216 aa)) is the B30.2/SPRY domain.

Belongs to the TRIM/RBCC family. Homotrimer. In terms of assembly, (Microbial infection) Interacts with HIV-1 Gag polyprotein; this interaction seems to reduce gag production or virus budding. As to quaternary structure, (Microbial infection) Interacts with EMCV protease 3C; this interaction leads to viral protease ubiquitination. Auto-ubiquitinated. As to expression, strongly expressed in peripheral blood leukocytes, spleen, thymus, and ovary. Expressed at basal levels in other tissues.

Its subcellular location is the cytoplasm. It localises to the nucleus. The protein localises to the nucleus speckle. The protein resides in the cajal body. The enzyme catalyses S-ubiquitinyl-[E2 ubiquitin-conjugating enzyme]-L-cysteine + [acceptor protein]-L-lysine = [E2 ubiquitin-conjugating enzyme]-L-cysteine + N(6)-ubiquitinyl-[acceptor protein]-L-lysine.. It functions in the pathway protein modification; protein ubiquitination. Its function is as follows. Interferon-induced E3 ubiquitin ligase that plays important roles in innate and adaptive immunity. Restricts the replication of many viruses including HIV-1, encephalomyocarditis virus (EMCV), hepatitis B virus (HBV), hepatitis C virus (HCV) or Zika virus (ZIKV). Mechanistically, negatively regulates HCV replication by promoting ubiquitination and subsequent degradation of viral NS5A. Also acts by promoting the degradation of Zika virus NS1 and NS3 proteins through proteasomal degradation. Acts as a suppressor of basal HIV-1 LTR-driven transcription by preventing Sp1 binding to the HIV-1 promoter. Also plays a role in antiviral immunity by co-regulating together with NT5C2 the RIGI/NF-kappa-B pathway by promoting 'Lys-63'-linked ubiquitination of RIGI, while NT5C2 is responsible for 'Lys-48'-linked ubiquitination of RIGI. Participates in adaptive immunity by suppressing the amount of MHC class II protein in a negative feedback manner in order to limit the extent of MHC class II induction. The sequence is that of E3 ubiquitin-protein ligase TRIM22 (TRIM22) from Homo sapiens (Human).